The chain runs to 22 residues: Unknown protein from spot 168 of 2D-PAGE of etiolated coleoptile (22 aa).

The protein is Unknown protein from spot 168 of 2D-PAGE of etiolated coleoptile of Zea mays (Maize).